The following is a 133-amino-acid chain: Large ribosomal subunit protein bL19 (133 aa).

A disordered region spans residues 114–133; it reads IAERQMTAASKEEPAEKSEA. The segment covering 123–133 has biased composition (basic and acidic residues); it reads SKEEPAEKSEA.

It belongs to the bacterial ribosomal protein bL19 family.

Functionally, this protein is located at the 30S-50S ribosomal subunit interface and may play a role in the structure and function of the aminoacyl-tRNA binding site. The protein is Large ribosomal subunit protein bL19 of Phenylobacterium zucineum (strain HLK1).